The chain runs to 107 residues: Nucleoid-associated protein Hhal_0231 (107 aa).

Disordered regions lie at residues 1–24 (MKGGLGNIMKQAQKMQEDMQKAQE) and 82–107 (VQRESQERMSGMAEGMGLPPGMKLPF). Residues 15 to 24 (MQEDMQKAQE) are compositionally biased toward basic and acidic residues.

The protein belongs to the YbaB/EbfC family. In terms of assembly, homodimer.

Its subcellular location is the cytoplasm. It localises to the nucleoid. Binds to DNA and alters its conformation. May be involved in regulation of gene expression, nucleoid organization and DNA protection. This chain is Nucleoid-associated protein Hhal_0231, found in Halorhodospira halophila (strain DSM 244 / SL1) (Ectothiorhodospira halophila (strain DSM 244 / SL1)).